The chain runs to 205 residues: MSKRQSAKYKLDRRMGENIWGRPKSPVNRREYGPGQHGQRRKGKLSDFGQQLRAKQKLKGYYGDLSEKQFRRIYDEANRRKGETTENLIGLLESRLDAIVFRAKFVPTPFAARQFVNHGHVKVNGRRVNIPSYRCKPGDVIEVREKSKQLTVVLESVALAERDVPDYIEVDHNKMTAKYVRMPALADVPYAVHMEPNLVIEYYSR.

A disordered region spans residues 1–49 (MSKRQSAKYKLDRRMGENIWGRPKSPVNRREYGPGQHGQRRKGKLSDFG). One can recognise an S4 RNA-binding domain in the interval 94–157 (SRLDAIVFRA…KQLTVVLESV (64 aa)).

It belongs to the universal ribosomal protein uS4 family. Part of the 30S ribosomal subunit. Contacts protein S5. The interaction surface between S4 and S5 is involved in control of translational fidelity.

Its function is as follows. One of the primary rRNA binding proteins, it binds directly to 16S rRNA where it nucleates assembly of the body of the 30S subunit. With S5 and S12 plays an important role in translational accuracy. In Chelativorans sp. (strain BNC1), this protein is Small ribosomal subunit protein uS4.